Reading from the N-terminus, the 550-residue chain is Hydroxylamine reductase (550 aa).

[2Fe-2S] cluster-binding residues include C3, C6, C18, and C25. 8 residues coordinate hybrid [4Fe-2O-2S] cluster: H249, E273, C317, C405, C433, C458, E492, and K494. C405 is subject to Cysteine persulfide.

This sequence belongs to the HCP family. It depends on [2Fe-2S] cluster as a cofactor. The cofactor is hybrid [4Fe-2O-2S] cluster.

The protein localises to the cytoplasm. It catalyses the reaction A + NH4(+) + H2O = hydroxylamine + AH2 + H(+). In terms of biological role, catalyzes the reduction of hydroxylamine to form NH(3) and H(2)O. The protein is Hydroxylamine reductase of Pectobacterium atrosepticum (strain SCRI 1043 / ATCC BAA-672) (Erwinia carotovora subsp. atroseptica).